The following is a 396-amino-acid chain: Chalcone synthase (396 aa).

Residue C167 is part of the active site.

Belongs to the thiolase-like superfamily. Chalcone/stilbene synthases family.

It catalyses the reaction (E)-4-coumaroyl-CoA + 3 malonyl-CoA + 3 H(+) = 2',4,4',6'-tetrahydroxychalcone + 3 CO2 + 4 CoA. The protein operates within secondary metabolite biosynthesis; flavonoid biosynthesis. In terms of biological role, the primary product of this enzyme is 4,2',4',6'-tetrahydroxychalcone (also termed naringenin-chalcone or chalcone) which can under specific conditions spontaneously isomerize into naringenin. The chain is Chalcone synthase (CHS) from Chrysosplenium americanum (American golden saxifrage).